Consider the following 188-residue polypeptide: Pupal cuticle protein Edg-84A (188 aa).

The N-terminal stretch at 1 to 17 (MLVKTALFVTLIGLAQA) is a signal peptide. Positions 19-67 (PLPAKSSGSEDTYDSHPQYSFNYDVQDPETGDVKSQSESRDGDVVHGQY) are disordered. The segment covering 24–41 (SSGSEDTYDSHPQYSFNY) has biased composition (polar residues). One can recognise a Chitin-binding type R&amp;R domain in the interval 34–100 (HPQYSFNYDV…AVVRREPLSS (67 aa)). The segment covering 49–62 (GDVKSQSESRDGDV) has biased composition (basic and acidic residues).

Imaginal (anterior) epidermis.

Component of the cuticle of the pupa of fruit fly. This chain is Pupal cuticle protein Edg-84A (Edg84A), found in Drosophila melanogaster (Fruit fly).